The primary structure comprises 360 residues: Peptide chain release factor 1 (360 aa).

Gln-236 bears the N5-methylglutamine mark. The segment at 288 to 308 is disordered; the sequence is QDEQDAERKSTIGTGDRSERI. The segment covering 293 to 308 has biased composition (basic and acidic residues); sequence AERKSTIGTGDRSERI.

Belongs to the prokaryotic/mitochondrial release factor family. Post-translationally, methylated by PrmC. Methylation increases the termination efficiency of RF1.

It is found in the cytoplasm. In terms of biological role, peptide chain release factor 1 directs the termination of translation in response to the peptide chain termination codons UAG and UAA. This is Peptide chain release factor 1 from Streptococcus equi subsp. equi (strain 4047).